A 267-amino-acid polypeptide reads, in one-letter code: Tryptophan 2,3-dioxygenase (267 aa).

Substrate is bound by residues 44 to 48 and Arg-114; that span reads FITIH. Residue His-225 coordinates heme. Substrate is bound at residue Thr-239.

The protein belongs to the tryptophan 2,3-dioxygenase family. As to quaternary structure, homotetramer. It depends on heme as a cofactor.

It carries out the reaction L-tryptophan + O2 = N-formyl-L-kynurenine. The protein operates within amino-acid degradation; L-tryptophan degradation via kynurenine pathway; L-kynurenine from L-tryptophan: step 1/2. Heme-dependent dioxygenase that catalyzes the oxidative cleavage of the L-tryptophan (L-Trp) pyrrole ring and converts L-tryptophan to N-formyl-L-kynurenine. Catalyzes the oxidative cleavage of the indole moiety. In Nocardioides sp. (strain ATCC BAA-499 / JS614), this protein is Tryptophan 2,3-dioxygenase.